Reading from the N-terminus, the 218-residue chain is Elongation factor Ts (218 aa).

Residues 82 to 85 are involved in Mg(2+) ion dislocation from EF-Tu; sequence TDFV.

Belongs to the EF-Ts family.

It localises to the cytoplasm. Its function is as follows. Associates with the EF-Tu.GDP complex and induces the exchange of GDP to GTP. It remains bound to the aminoacyl-tRNA.EF-Tu.GTP complex up to the GTP hydrolysis stage on the ribosome. The sequence is that of Elongation factor Ts from Prochlorococcus marinus (strain MIT 9301).